A 284-amino-acid chain; its full sequence is Nucleotide-binding protein Sputcn32_0712 (284 aa).

8 to 15 (GRSGSGKS) contacts ATP. Position 56–59 (56–59 (DVRN)) interacts with GTP.

The protein belongs to the RapZ-like family.

Its function is as follows. Displays ATPase and GTPase activities. The polypeptide is Nucleotide-binding protein Sputcn32_0712 (Shewanella putrefaciens (strain CN-32 / ATCC BAA-453)).